A 190-amino-acid chain; its full sequence is Glutathione peroxidase 2 (190 aa).

The active site involves Sec40. A non-standard amino acid (selenocysteine) is located at residue Sec40.

This sequence belongs to the glutathione peroxidase family. In terms of assembly, homotetramer.

The protein resides in the cytoplasm. The protein localises to the cytosol. The enzyme catalyses 2 glutathione + H2O2 = glutathione disulfide + 2 H2O. The catalysed reaction is a hydroperoxy polyunsaturated fatty acid + 2 glutathione = a hydroxy polyunsaturated fatty acid + glutathione disulfide + H2O. It catalyses the reaction tert-butyl hydroperoxide + 2 glutathione = tert-butanol + glutathione disulfide + H2O. It carries out the reaction cumene hydroperoxide + 2 glutathione = 2-phenylpropan-2-ol + glutathione disulfide + H2O. The enzyme catalyses (13S)-hydroperoxy-(9Z,11E)-octadecadienoate + 2 glutathione = (13S)-hydroxy-(9Z,11E)-octadecadienoate + glutathione disulfide + H2O. The catalysed reaction is (5S)-hydroperoxy-(6E,8Z,11Z,14Z)-eicosatetraenoate + 2 glutathione = (5S)-hydroxy-(6E,8Z,11Z,14Z)-eicosatetraenoate + glutathione disulfide + H2O. It catalyses the reaction (12R)-hydroperoxy-(5Z,8Z,10E,14Z)-eicosatetraenoate + 2 glutathione = (12R)-hydroxy-(5Z,8Z,10E,14Z)-eicosatetraenoate + glutathione disulfide + H2O. It carries out the reaction (15S)-hydroperoxy-(5Z,8Z,11Z,13E)-eicosatetraenoate + 2 glutathione = (15S)-hydroxy-(5Z,8Z,11Z,13E)-eicosatetraenoate + glutathione disulfide + H2O. Its function is as follows. Catalyzes the reduction of hydroperoxides in a glutathione-dependent manner thus regulating cellular redox homeostasis. Can reduce small soluble hydroperoxides such as H2O2, cumene hydroperoxide and tert-butyl hydroperoxide, as well as several fatty acid-derived hydroperoxides. Cannot reduce phosphatidycholine hydroperoxide. This is Glutathione peroxidase 2 (GPX2) from Callithrix jacchus (White-tufted-ear marmoset).